The sequence spans 25 residues: Mu-conotoxin CnIIIB (25 aa).

Glutamine 1 is subject to Pyrrolidone carboxylic acid; partial. 3 disulfide bridges follow: cysteine 3–cysteine 15, cysteine 4–cysteine 21, and cysteine 10–cysteine 22.

Belongs to the conotoxin M superfamily. In terms of tissue distribution, expressed by the venom duct.

The protein localises to the secreted. Mu-conotoxins block voltage-gated sodium channels (Nav). This synthetic toxin blocks slightly but irreversibly tetrodotoxin-resistant VGSCs. The sequence is that of Mu-conotoxin CnIIIB from Conus consors (Singed cone).